A 141-amino-acid polypeptide reads, in one-letter code: Large ribosomal subunit protein uL16m (141 aa).

It belongs to the universal ribosomal protein uL16 family.

The protein localises to the mitochondrion. The chain is Large ribosomal subunit protein uL16m (RPL16) from Acanthamoeba castellanii (Amoeba).